The sequence spans 78 residues: MKSSMKMFAALLLVVMCLLANEMGGPLVVEARTCESQSHKFKGTCLSDTNCANVCHSERFSGGKCRGFRRRCFCTTHC.

The N-terminal stretch at 1–20 is a signal peptide; the sequence is MKSSMKMFAALLLVVMCLLA. 4 disulfide bridges follow: Cys-34-Cys-78, Cys-45-Cys-65, Cys-51-Cys-72, and Cys-55-Cys-74.

It belongs to the DEFL family. In terms of tissue distribution, highest expression in flowers and to a lesser extent in leaves. Lower levels in hypocotyls. No expression in roots and cotyledons.

It localises to the secreted. Its subcellular location is the cell wall. Functionally, may play a protective role in flowers by protecting the reproductive organs from potential pathogen attack. The chain is Defensin SD2 (SD2) from Helianthus annuus (Common sunflower).